The primary structure comprises 72 residues: Gas vesicle protein A (72 aa).

It belongs to the gas vesicle GvpA family. As to quaternary structure, the gas vesicle shell is 2 nm thick and consists of a single layer of this protein. It forms helical ribs nearly perpendicular to the long axis of the vesicle.

The protein localises to the gas vesicle shell. Gas vesicles are hollow, gas filled proteinaceous nanostructures found in some microorganisms. During planktonic growth they allow positioning of the organism at a favorable depth for light or nutrient acquisition. GvpA forms the protein shell. The sequence is that of Gas vesicle protein A from Synechococcus sp. (strain JA-3-3Ab) (Cyanobacteria bacterium Yellowstone A-Prime).